Here is an 806-residue protein sequence, read N- to C-terminus: Zygotic DNA replication licensing factor mcm3 (806 aa).

The region spanning 295-502 (VFEQLSRSLA…HDREISDHVL (208 aa)) is the MCM domain. An ATP-binding site is contributed by 345–352 (GDPSVAKS). The short motif at 477–480 (SRFD) is the Arginine finger element. Residues 662–738 (KKRRRREGES…TDSSAKPGLS (77 aa)) form a disordered region. Residues 693-702 (AQDGESHDPY) show a composition bias toward basic and acidic residues.

It belongs to the MCM family. In terms of assembly, component of the mcm2-7 complex (RLF-M). The complex forms a toroidal hexameric ring with the proposed subunit order mcm2-mcm6-mcm4-mcm7-mcm3-mcm5. Begins to associate with zmcm6 into mcm complexes at the neurula stage. Component of the CMG helicase complex, composed of the mcm2-7 complex, the GINS complex and cdc45.

Its subcellular location is the nucleus. It localises to the chromosome. The enzyme catalyses ATP + H2O = ADP + phosphate + H(+). Acts as a component of the mcm2-7 complex (mcm complex) which is the putative replicative helicase essential for 'once per cell cycle' DNA replication initiation and elongation in eukaryotic cells. The active ATPase sites in the mcm2-7 ring are formed through the interaction surfaces of two neighboring subunits such that a critical structure of a conserved arginine finger motif is provided in trans relative to the ATP-binding site of the Walker A box of the adjacent subunit. The six ATPase active sites, however, are likely to contribute differentially to the complex helicase activity. The existence of maternal and zygotic forms of mcm3 and mcm6 suggests that specific forms of mcm2-7 complexes may be used during different stages of development. The polypeptide is Zygotic DNA replication licensing factor mcm3 (Xenopus laevis (African clawed frog)).